Here is a 232-residue protein sequence, read N- to C-terminus: Probable anion ABC transporter permease protein HVO_1887 (232 aa).

The 202-residue stretch at 16–217 (TAVSLYVSTA…ALVLGVNALG (202 aa)) folds into the ABC transmembrane type-1 domain. The next 5 helical transmembrane spans lie at 23 to 43 (STAA…AVGF), 55 to 75 (VIST…LLVL), 93 to 113 (MILS…LSAV), 146 to 166 (IVTA…SVLI), and 198 to 218 (TGIA…ALGA).

Belongs to the binding-protein-dependent transport system permease family. As to quaternary structure, the complex is composed of two ATP-binding proteins (HVO_1886), two transmembrane proteins (HVO_1887) and a solute-binding protein (HVO_1888).

Its subcellular location is the cell membrane. Functionally, part of an ABC transporter complex involved in anions import. Responsible for the translocation of the substrate across the membrane. In Haloferax volcanii (strain ATCC 29605 / DSM 3757 / JCM 8879 / NBRC 14742 / NCIMB 2012 / VKM B-1768 / DS2) (Halobacterium volcanii), this protein is Probable anion ABC transporter permease protein HVO_1887.